The sequence spans 393 residues: Bifunctional chrysanthemol synthase, chloroplastic (393 aa).

Low complexity predominate over residues 1–18 (MACSSSLSSKWASWGASS). Residues 1–22 (MACSSSLSSKWASWGASSRPHP) form a disordered region. The transit peptide at 1–53 (MACSSSLSSKWASWGASSRPHPSVQPFVTRKNVVRYHKPTSELSYSPLTTTLS) directs the protein to the chloroplast. Dimethylallyl diphosphate is bound by residues Lys-99, Arg-102, and Gln-137. Positions 144 and 148 each coordinate Mg(2+). The dimethylallyl diphosphate site is built by Arg-153, Arg-154, Lys-241, Gln-280, Asp-287, Lys-297, and Lys-306.

The protein belongs to the FPP/GGPP synthase family. Mg(2+) serves as cofactor. As to expression, restricted to glandular trichomes during achene maturation. Expressed in flowers and in both ray and disk florets.

Its subcellular location is the plastid. It is found in the chloroplast. It carries out the reaction 2 dimethylallyl diphosphate = (R,R)-chrysanthemyl diphosphate + diphosphate. It catalyses the reaction (R,R)-chrysanthemyl diphosphate + H2O = (R,R)-chrysanthemol + diphosphate. The enzyme catalyses (R)-lavandulyl diphosphate + H2O = (R)-lavandulol + diphosphate. It participates in isoprenoid biosynthesis. In terms of biological role, component of the monoterpenoid pyrethrins biosynthesis; pyrethrins are widely used plant-derived pesticide. Catalyzes the condensation of two molecules of dimethylallyl diphosphate to produce chrysanthemyl diphosphate (CPP), a monoterpene with a non-head-to-tail or irregular c1'-2-3 linkage between isoprenoid units. In a second step, hydrolyzes the diphosphate moiety of CPP to form chrysanthemol. With a lower efficiency, can also converts dimethylallyl diphosphate into lavandulyl diphosphate (LPP), and subsequently LPP into lavandulol. The sequence is that of Bifunctional chrysanthemol synthase, chloroplastic from Tanacetum cinerariifolium (Dalmatian daisy).